The primary structure comprises 208 residues: Guanylate kinase (208 aa).

The region spanning 4-185 (GNLYILSAPS…ALADLVHILR (182 aa)) is the Guanylate kinase-like domain. An ATP-binding site is contributed by 11–18 (APSGAGKS).

It belongs to the guanylate kinase family.

The protein localises to the cytoplasm. It carries out the reaction GMP + ATP = GDP + ADP. In terms of biological role, essential for recycling GMP and indirectly, cGMP. The sequence is that of Guanylate kinase from Mannheimia succiniciproducens (strain KCTC 0769BP / MBEL55E).